Here is a 143-residue protein sequence, read N- to C-terminus: Small ribosomal subunit protein uS9 (143 aa).

The segment at 123–143 (RPEPKKFGGRGARSRFQKSYR) is disordered. Residues 134 to 143 (ARSRFQKSYR) are compositionally biased toward basic residues.

It belongs to the universal ribosomal protein uS9 family.

This Kluyveromyces lactis (strain ATCC 8585 / CBS 2359 / DSM 70799 / NBRC 1267 / NRRL Y-1140 / WM37) (Yeast) protein is Small ribosomal subunit protein uS9 (RPS16).